The sequence spans 337 residues: Methylthioribose-1-phosphate isomerase (337 aa).

Residues 51-53 (RGA), R88, and Q187 contribute to the substrate site. The active-site Proton donor is D228. Residue 238–239 (NK) coordinates substrate.

Belongs to the eIF-2B alpha/beta/delta subunits family. MtnA subfamily.

It carries out the reaction 5-(methylsulfanyl)-alpha-D-ribose 1-phosphate = 5-(methylsulfanyl)-D-ribulose 1-phosphate. The protein operates within amino-acid biosynthesis; L-methionine biosynthesis via salvage pathway; L-methionine from S-methyl-5-thio-alpha-D-ribose 1-phosphate: step 1/6. Functionally, catalyzes the interconversion of methylthioribose-1-phosphate (MTR-1-P) into methylthioribulose-1-phosphate (MTRu-1-P). The protein is Methylthioribose-1-phosphate isomerase of Anaeromyxobacter sp. (strain Fw109-5).